A 200-amino-acid polypeptide reads, in one-letter code: Phospholipase A2 inhibitor 1 (200 aa).

The signal sequence occupies residues 1–19; sequence MKSLHIICLLFIFVARGNS. Disulfide bonds link Cys-22/Cys-46, Cys-25/Cys-32, Cys-39/Cys-67, Cys-73/Cys-94, Cys-95/Cys-100, Cys-118/Cys-143, Cys-136/Cys-165, and Cys-169/Cys-191. Asn-176 carries an N-linked (GlcNAc...) asparagine glycan.

It belongs to the CNF-like-inhibitor family. Occurs as a mixture of oligomers. Tetrameric arrangement appears to be the predominant quaternary structure. Post-translationally, N-glycosylated. As to expression, expressed by the liver.

The protein localises to the secreted. Inhibits basic phospholipase A2 isozymes PLA-B, BP-I and BP-II. The sequence is that of Phospholipase A2 inhibitor 1 from Protobothrops flavoviridis (Habu).